The chain runs to 187 residues: Cytokinin riboside 5'-monophosphate phosphoribohydrolase (187 aa).

Residue lysine 74 forms an Isoglutamyl lysine isopeptide (Lys-Gln) (interchain with Q-Cter in protein Pup) linkage. Residues glutamate 80, 98–99, 115–121, and threonine 127 each bind substrate; these read RK and GVGTLDE.

This sequence belongs to the LOG family. In terms of assembly, homodimer. In terms of processing, pupylated at Lys-74 by the prokaryotic ubiquitin-like protein Pup, which leads to its degradation by the proteasome. The proteasomal control of cytokinin synthesis is essential to protect M.tuberculosis against host-produced NO.

It catalyses the reaction N(6)-(dimethylallyl)adenosine 5'-phosphate + H2O = N(6)-dimethylallyladenine + D-ribose 5-phosphate. The enzyme catalyses 9-ribosyl-trans-zeatin 5'-phosphate + H2O = trans-zeatin + D-ribose 5-phosphate. Functionally, catalyzes the hydrolytic removal of ribose 5'-monophosphate from nitrogen N6-modified adenosines, the final step of bioactive cytokinin synthesis. Is involved in the synthesis of isopentenyladenine (iP) and 2-methylthio-iP (2MeS-iP), the most abundant cytokinins detected in M.tuberculosis lysates and supernatants. Is also able to convert trans-zeatin-riboside monophosphate (tZRMP) to trans-zeatin (tZ) in vitro; however, it may not be involved in the biosynthesis of this minor cytokinin in vivo. Accumulation of Rv1205 sensitizes M.tuberculosis to nitric oxide since cytokinin breakdown products synergize with NO to kill M.tuberculosis. Shows a slow AMP hydrolase activity, but is not able to hydrolyze ATP. Displays no lysine decarboxylase (LDC) activity (L-lysine conversion to cadaverine). The sequence is that of Cytokinin riboside 5'-monophosphate phosphoribohydrolase from Mycobacterium tuberculosis (strain ATCC 25618 / H37Rv).